The sequence spans 740 residues: Catalase-peroxidase (740 aa).

Positions 107-229 (WHAAGTYRIH…LAAVQMGLIY (123 aa)) form a cross-link, tryptophyl-tyrosyl-methioninium (Trp-Tyr) (with M-255). H108 acts as the Proton acceptor in catalysis. The tryptophyl-tyrosyl-methioninium (Tyr-Met) (with W-107) cross-link spans 229–255 (YVNPEGPNGNPDPMAAAVDIRETFRRM). H270 provides a ligand contact to heme b. W321 (tryptophan radical intermediate) is an active-site residue.

Belongs to the peroxidase family. Peroxidase/catalase subfamily. As to quaternary structure, homodimer. Requires heme b as cofactor. Post-translationally, formation of the three residue Trp-Tyr-Met cross-link is important for the catalase, but not the peroxidase activity of the enzyme.

It carries out the reaction H2O2 + AH2 = A + 2 H2O. The enzyme catalyses 2 H2O2 = O2 + 2 H2O. In terms of biological role, bifunctional enzyme with both catalase and broad-spectrum peroxidase activity, oxidizing various electron donors including NADP(H). Protects M.tuberculosis against toxic reactive oxygen species (ROS) including hydrogen peroxide as well as organic peroxides and thus contributes to its survival within host macrophages by countering the phagocyte oxidative burst. Also displays efficient peroxynitritase activity, which may help the bacterium to persist in macrophages. Catalyzes the oxidative activation of the antitubercular pro-drug isoniazid (INH) to generate an isonicotinoyl radical that then reacts nonenzymatically with NAD to form an isonicotinoyl-NAD adduct which inhibits InhA. The sequence is that of Catalase-peroxidase from Mycobacterium tuberculosis (strain CDC 1551 / Oshkosh).